We begin with the raw amino-acid sequence, 364 residues long: Ferrochelatase (364 aa).

Histidine 213 and glutamate 294 together coordinate Fe cation.

Belongs to the ferrochelatase family.

It localises to the cytoplasm. It carries out the reaction heme b + 2 H(+) = protoporphyrin IX + Fe(2+). It functions in the pathway porphyrin-containing compound metabolism; protoheme biosynthesis; protoheme from protoporphyrin-IX: step 1/1. In terms of biological role, catalyzes the ferrous insertion into protoporphyrin IX. This is Ferrochelatase from Chromobacterium violaceum (strain ATCC 12472 / DSM 30191 / JCM 1249 / CCUG 213 / NBRC 12614 / NCIMB 9131 / NCTC 9757 / MK).